The sequence spans 551 residues: Calcium-dependent protein kinase 3 (551 aa).

The segment at 1–57 is disordered; the sequence is MGNCCRSPAAAAREDVKSSHFPASAGKKKPHQARNGGVGGGGGGGGGGGGGGGAGQK. Glycine 2 carries N-myristoyl glycine lipidation. Over residues 36–55 the composition is skewed to gly residues; the sequence is GGVGGGGGGGGGGGGGGGAG. The Protein kinase domain occupies 77-335; that stretch reads YALDRELGRG…AKQVLEHPWL (259 aa). ATP contacts are provided by residues 83 to 91 and lysine 106; that span reads LGRGEFGVT. The Proton acceptor role is filled by aspartate 201. Positions 341–371 are autoinhibitory domain; it reads APNVPLGDIVKSRLKQFSRMNRFKRRALRVI. EF-hand domains follow at residues 378–413, 414–449, 450–485, and 486–521; these read EEVEDIKEMFKAMDTDNDGIVSYEELKSGIAKFGSH, LAESEVQMLIEAVDTNGKDALDYGEFLAVSLHLQRM, ANDEHLRRAFLFFDKDGNGYIEPEELREALVDDGAG, and DSMEVVNDILQEVDTDKDGKISYDEFVAMMKTGTDW. Residues aspartate 391, aspartate 393, aspartate 395, glutamate 402, aspartate 427, asparagine 429, glutamate 438, aspartate 463, aspartate 465, asparagine 467, tyrosine 469, glutamate 474, aspartate 499, aspartate 501, aspartate 503, lysine 505, and glutamate 510 each coordinate Ca(2+).

It belongs to the protein kinase superfamily. Ser/Thr protein kinase family. CDPK subfamily. Expressed in roots and developing seeds.

The protein resides in the membrane. It catalyses the reaction L-seryl-[protein] + ATP = O-phospho-L-seryl-[protein] + ADP + H(+). The enzyme catalyses L-threonyl-[protein] + ATP = O-phospho-L-threonyl-[protein] + ADP + H(+). With respect to regulation, activated by calcium. Autophosphorylation may play an important role in the regulation of the kinase activity. Functionally, may play a role in signal transduction pathways that involve calcium as a second messenger. The sequence is that of Calcium-dependent protein kinase 3 from Oryza sativa subsp. japonica (Rice).